The chain runs to 314 residues: Methionyl-tRNA formyltransferase (314 aa).

111–114 provides a ligand contact to (6S)-5,6,7,8-tetrahydrofolate; sequence SLLP.

It belongs to the Fmt family.

The enzyme catalyses L-methionyl-tRNA(fMet) + (6R)-10-formyltetrahydrofolate = N-formyl-L-methionyl-tRNA(fMet) + (6S)-5,6,7,8-tetrahydrofolate + H(+). Its function is as follows. Attaches a formyl group to the free amino group of methionyl-tRNA(fMet). The formyl group appears to play a dual role in the initiator identity of N-formylmethionyl-tRNA by promoting its recognition by IF2 and preventing the misappropriation of this tRNA by the elongation apparatus. This is Methionyl-tRNA formyltransferase from Coxiella burnetii (strain CbuG_Q212) (Coxiella burnetii (strain Q212)).